The primary structure comprises 196 residues: Small ribosomal subunit protein uS4c (196 aa).

An S4 RNA-binding domain is found at 82-143; it reads MRLDNILFRL…KQKSKALIQN (62 aa).

It belongs to the universal ribosomal protein uS4 family. As to quaternary structure, part of the 30S ribosomal subunit. Contacts protein S5. The interaction surface between S4 and S5 is involved in control of translational fidelity.

It localises to the plastid. Its subcellular location is the chloroplast. In terms of biological role, one of the primary rRNA binding proteins, it binds directly to 16S rRNA where it nucleates assembly of the body of the 30S subunit. With S5 and S12 plays an important role in translational accuracy. This is Small ribosomal subunit protein uS4c (rps4) from Patersonia sp. (strain Lejeune 1997).